A 248-amino-acid polypeptide reads, in one-letter code: Ribosomal RNA small subunit methyltransferase J (248 aa).

S-adenosyl-L-methionine contacts are provided by residues 101-102 (RD), 117-118 (ER), 153-154 (SS), and Asp-171.

This sequence belongs to the methyltransferase superfamily. RsmJ family.

It is found in the cytoplasm. The enzyme catalyses guanosine(1516) in 16S rRNA + S-adenosyl-L-methionine = N(2)-methylguanosine(1516) in 16S rRNA + S-adenosyl-L-homocysteine + H(+). Its function is as follows. Specifically methylates the guanosine in position 1516 of 16S rRNA. This Serratia proteamaculans (strain 568) protein is Ribosomal RNA small subunit methyltransferase J.